Reading from the N-terminus, the 565-residue chain is Perivitellin-2 67 kDa subunit (565 aa).

The N-terminal stretch at 1–26 is a signal peptide; the sequence is MSQLRWWVVSQLLLLIVVCILDHSEG. Residues 27–340 enclose the MACPF domain; sequence ARVCPKIVPG…AKVANLDRLT (314 aa).

In terms of assembly, perivitellin-2 is a heterooctamer of 4 identical 98 kDa heterodimers, each composed of one 31 kDa and one 67 kDa subunits. The 98 kDa heterodimer subunits are held together by disulfide bridges while the heterodimers are assembled into the native perivitellin-2 octamer by non-covalent forces. In terms of processing, glycosylated. Contains four O-linked and one N-linked oligosaccharide bonds. The protein contains 2.5% of carbohydrates (high levels of mannose, galactose, and NAcGlucosamine, and small amounts of NacGalactosamine). PV2 is a very high density lipoprotein (VHDL). It contains 3.75% of lipids. The major lipid classes are free sterols and phospholipids and also have significant quantities of energy-providing triacylglycerides and free fatty acids. As to expression, produced by albumen secretory cells. Found in developing eggs.

The protein resides in the secreted. It localises to the target cell membrane. The egg defensive protein perivitellin-2 is a pore-forming two-subunit glycoprotein that affects both the nervous and digestive systems of mammals. In addition, it is a source of both structural and energetic molecules during embryonic development. The tachylectin subunit (31 kDa) binds target membranes while the MACPF subunit (67 kDa) disrupts lipid bilayers forming large pores altering the plasma membrance conductance. Both in vivo and in vitro, the protein shows wide pH range stability and is resistant to enzymatic proteolysis from gastrointestinal environments. It specifically binds mature enterocytes but does not cause cell disruption on caco-2 (human colorectal adenocarcinoma cells) or rat intestinal cells. After oral administration to mice, it binds enterocytes and induces large dose-dependent morphological changes on their small intestine mucosa, reducing the absorptive surface. Additionally, it is detected in the Peyer's patches where it activates lymphoid follicles and triggers apoptosis. The toxin can also traverse the intestinal barrier and induce oral adaptive immunity with evidence of circulating antibody response. The toxin also shows hemagglutination properties thanks to the tachylectin subunit, but does not show hemolytic activity. In addition to enterotoxin activity, the toxin also acts as a neurotoxin, since an intraperitoneal injection induces paralysis of the mice rear limbs, followed by death. This chain is Perivitellin-2 67 kDa subunit, found in Pomacea canaliculata (Golden apple snail).